The chain runs to 324 residues: 6-methylsalicylic acid decarboxylase (324 aa).

Zn(2+) is bound by residues His-7, His-9, His-157, and Asp-274.

The protein belongs to the metallo-dependent hydrolases superfamily. ACMSD family. As to quaternary structure, monomer.

The protein resides in the cytoplasm. It is found in the cytosol. The enzyme catalyses 6-methylsalicylate + H(+) = 3-methylphenol + CO2. The protein operates within mycotoxin biosynthesis; patulin biosynthesis. Functionally, 6-methylsalicylic acid decarboxylase; part of the gene cluster that mediates the biosynthesis of patulin, an acetate-derived tetraketide mycotoxin produced by several fungal species that shows antimicrobial properties against several bacteria. PatG catalyzes the decarboxylation of 6-methylsalicylic acid to yield m-cresol. The pathway begins with the synthesis of 6-methylsalicylic acid by the polyketide synthase (PKS) patK via condensation of acetate and malonate units. The 6-methylsalicylic acid decarboxylase patG then catalyzes the decarboxylation of 6-methylsalicylic acid to yield m-cresol (also known as 3-methylphenol). These first reactions occur in the cytosol. The intermediate m-cresol is then transported into the endoplasmic reticulum where the cytochrome P450 monooxygenase patH converts it to m-hydroxybenzyl alcohol, which is further converted to gentisyl alcohol by the cytochrome P450 monooxygenase patI. The oxidoreductases patJ and patO further convert gentisyl alcohol to isoepoxydon in the vacuole. PatN catalyzes then the transformation of isoepoxydon into phyllostine. The cluster protein patF is responsible for the conversion from phyllostine to neopatulin whereas the alcohol dehydrogenase patD converts neopatulin to E-ascladiol. The steps between isoepoxydon and E-ascladiol occur in the cytosol, and E-ascladiol is probably secreted to the extracellular space by one of the cluster-specific transporters patC or patM. Finally, the secreted patulin synthase patE catalyzes the conversion of E-ascladiol to patulin. In Penicillium expansum (Blue mold rot fungus), this protein is 6-methylsalicylic acid decarboxylase.